A 543-amino-acid chain; its full sequence is CTP synthase (543 aa).

Residues 1-265 are amidoligase domain; it reads MTRYIFVTGG…DDYVVERFGL (265 aa). Position 13 (serine 13) interacts with CTP. Residue serine 13 participates in UTP binding. Residues 14–19 and aspartate 71 contribute to the ATP site; that span reads SLGKGI. Residues aspartate 71 and glutamate 139 each contribute to the Mg(2+) site. CTP is bound by residues 146–148, 186–191, and lysine 222; these read DIE and KTKPTQ. UTP is bound by residues 186 to 191 and lysine 222; that span reads KTKPTQ. A Glutamine amidotransferase type-1 domain is found at 290–541; it reads NIAMVGKYME…VNAALEYKAK (252 aa). Residue glycine 351 coordinates L-glutamine. The active-site Nucleophile; for glutamine hydrolysis is the cysteine 378. L-glutamine-binding positions include 379–382, glutamate 402, and arginine 469; that span reads LGMQ. Catalysis depends on residues histidine 514 and glutamate 516.

The protein belongs to the CTP synthase family. In terms of assembly, homotetramer.

It carries out the reaction UTP + L-glutamine + ATP + H2O = CTP + L-glutamate + ADP + phosphate + 2 H(+). The enzyme catalyses L-glutamine + H2O = L-glutamate + NH4(+). The catalysed reaction is UTP + NH4(+) + ATP = CTP + ADP + phosphate + 2 H(+). The protein operates within pyrimidine metabolism; CTP biosynthesis via de novo pathway; CTP from UDP: step 2/2. With respect to regulation, allosterically activated by GTP, when glutamine is the substrate; GTP has no effect on the reaction when ammonia is the substrate. The allosteric effector GTP functions by stabilizing the protein conformation that binds the tetrahedral intermediate(s) formed during glutamine hydrolysis. Inhibited by the product CTP, via allosteric rather than competitive inhibition. Functionally, catalyzes the ATP-dependent amination of UTP to CTP with either L-glutamine or ammonia as the source of nitrogen. Regulates intracellular CTP levels through interactions with the four ribonucleotide triphosphates. The chain is CTP synthase from Stutzerimonas stutzeri (strain A1501) (Pseudomonas stutzeri).